A 451-amino-acid chain; its full sequence is Runt-related transcription factor 1 (451 aa).

The disordered stretch occupies residues Met1–Gly37. The segment covering Ala7–Leu20 has biased composition (polar residues). Residue Thr14 is modified to Phosphothreonine. Residue Ser21 is modified to Phosphoserine. N6-acetyllysine is present on residues Lys24 and Lys43. The 129-residue stretch at Ser50–Arg178 folds into the Runt domain. The segment at Arg80 to Thr84 is interaction with DNA. Residues Asn112, Glu116, Arg139, and Val170 each contribute to the chloride site. Interaction with DNA stretches follow at residues Arg135–Gly143 and Ile168–Arg177. Disordered regions lie at residues Val170–Ser195 and Met209–Trp252. A phosphoserine mark is found at Ser193 and Ser212. Over residues Pro222–Gln247 the composition is skewed to polar residues. The residue at position 249 (Ser249) is a Phosphoserine; by HIPK2. Phosphoserine occurs at positions 266 and 268. The segment at Ser268–Leu290 is disordered. The residue at position 273 (Thr273) is a Phosphothreonine; by HIPK2. The residue at position 276 (Ser276) is a Phosphoserine; by HIPK2. Positions Ser291–Thr370 are interaction with KAT6A. Thr296 is subject to Phosphothreonine. Residues Arg307 to Arg399 are interaction with KAT6B. Residues Ser361–Leu401 form an interaction with FOXP3 region. The interval Asn406–Tyr451 is disordered. Positions Ser417–Thr436 are enriched in polar residues. Phosphoserine is present on Ser434. A compositionally biased stretch (basic and acidic residues) spans Arg442–Tyr451.

As to quaternary structure, heterodimer with CBFB. RUNX1 binds DNA as a monomer and through the Runt domain. DNA-binding is increased by heterodimerization. Interacts with TLE1 and ALYREF/THOC4. Interacts with HIPK2, ELF1, ELF2 and SPI1. Interacts via its Runt domain with the ELF4 N-terminal region. Interaction with ELF2 isoform 2 (NERF-1a) may act to repress RUNX1-mediated transactivation. Interacts with KAT6A and KAT6B. Interacts with SUV39H1, leading to abrogation of transactivating and DNA-binding properties of RUNX1. Interacts with YAP1. Interaction with CDK6 prevents myeloid differentiation, reducing its transcription transactivation activity. Found in a complex with PRMT5, RUNX1 and CBFB. Interacts with FOXP3. Interacts with TBX21. Interacts with DPF2. Phosphorylated in its C-terminus upon IL-6 treatment. Phosphorylation enhances interaction with KAT6A. Post-translationally, methylated. In terms of processing, phosphorylated in Ser-249 Thr-273 and Ser-276 by HIPK2 when associated with CBFB and DNA. This phosphorylation promotes subsequent EP300 phosphorylation. Isoform 4 is expressed at high levels in thymus, spleen and T-cell lines and at lower levels in myeloid cell lines and nonhematopoietic cells. Isoform 5 is expressed ubiquitously in lumbar vertebrae, brain, kidney, heart, muscle, ovary and osteoblast-like cell line MC3T3-E1.

It is found in the nucleus. Forms the heterodimeric complex core-binding factor (CBF) with CBFB. RUNX members modulate the transcription of their target genes through recognizing the core consensus binding sequence 5'-TGTGGT-3', or very rarely, 5'-TGCGGT-3', within their regulatory regions via their runt domain, while CBFB is a non-DNA-binding regulatory subunit that allosterically enhances the sequence-specific DNA-binding capacity of RUNX. The heterodimers bind to the core site of a number of enhancers and promoters, including murine leukemia virus, polyomavirus enhancer, T-cell receptor enhancers, LCK, IL3 and GM-CSF promoters. Essential for the development of normal hematopoiesis. Acts synergistically with ELF4 to transactivate the IL-3 promoter and with ELF2 to transactivate the BLK promoter. Inhibits KAT6B-dependent transcriptional activation. Involved in lineage commitment of immature T cell precursors. CBF complexes repress ZBTB7B transcription factor during cytotoxic (CD8+) T cell development. They bind to RUNX-binding sequence within the ZBTB7B locus acting as transcriptional silencer and allowing for cytotoxic T cell differentiation. CBF complexes binding to the transcriptional silencer is essential for recruitment of nuclear protein complexes that catalyze epigenetic modifications to establish epigenetic ZBTB7B silencing. Controls the anergy and suppressive function of regulatory T-cells (Treg) by associating with FOXP3. Activates the expression of IL2 and IFNG and down-regulates the expression of TNFRSF18, IL2RA and CTLA4, in conventional T-cells. Positively regulates the expression of RORC in T-helper 17 cells. Functionally, isoform 4 shows higher binding activities for target genes and binds TCR-beta-E2 and RAG-1 target site with threefold higher affinity than other isoforms. It is less effective in the context of neutrophil terminal differentiation. This chain is Runt-related transcription factor 1 (Runx1), found in Mus musculus (Mouse).